The chain runs to 938 residues: Cyclin-dependent kinase-like 5 (938 aa).

The Protein kinase domain maps to 13 to 297; that stretch reads FEILGVVGEG…TEQCLNHPTF (285 aa). ATP is bound by residues 19 to 27 and lysine 42; that span reads VGEGAYGVV. Catalysis depends on aspartate 135, which acts as the Proton acceptor. 4 disordered regions span residues 298-348, 382-566, 646-865, and 877-938; these read QTQR…DIQN, KTYQ…RHSK, SPQP…LTAQ, and HPLS…KWKQ. Composition is skewed to polar residues over residues 319 to 331 and 382 to 402; these read ESSTLSNRNQSTK and KTYQASTQPGSSSKDLTNNNI. Phosphoserine is present on serine 407. The segment covering 407-417 has biased composition (basic and acidic residues); the sequence is SPKEAKSKTEF. Composition is skewed to polar residues over residues 434–462, 473–482, and 494–548; these read LKSSTRSQQNRHSFMESSQSKAGTLQPSE, IPQSSRSPSY, and DSKS…SGRN. Serine 479 carries the post-translational modification Phosphoserine. 2 stretches are compositionally biased toward basic and acidic residues: residues 549-559 and 679-704; these read NRNEGTLDSRR and QKSEGGVYHDPHSDDGTAPKENRHLY. Residue serine 720 is modified to Phosphoserine. Polar residues predominate over residues 728 to 748; sequence HENNVSTRVSSLPSDSSSGTN. Serine 761 carries the phosphoserine modification. Basic and acidic residues-rich tracts occupy residues 769–778 and 817–827; these read DQLKEKEKQG and RPKEWRPEKLS. Residues 880 to 891 show a composition bias toward polar residues; sequence SQATGGSSNIRQ.

This sequence belongs to the protein kinase superfamily. CMGC Ser/Thr protein kinase family. CDC2/CDKX subfamily. Interacts with MECP2. Autophosphorylated.

The protein localises to the nucleus. It is found in the cytoplasm. Its subcellular location is the cytoskeleton. The protein resides in the cilium basal body. It localises to the microtubule organizing center. The protein localises to the centrosome. It catalyses the reaction L-seryl-[protein] + ATP = O-phospho-L-seryl-[protein] + ADP + H(+). It carries out the reaction L-threonyl-[protein] + ATP = O-phospho-L-threonyl-[protein] + ADP + H(+). In terms of biological role, mediates phosphorylation of MECP2. May regulate ciliogenesis. This Mus musculus (Mouse) protein is Cyclin-dependent kinase-like 5.